The chain runs to 314 residues: Mitochondrial 2-oxoglutarate/malate carrier protein (314 aa).

At A2 the chain carries N-acetylalanine. A Phosphoserine modification is found at S6. Solcar repeat units follow at residues 23-108 (VKFL…LFER), 117-208 (PGFL…SKQF), and 217-306 (DNIL…MNKA). Residues 24-42 (KFLFGGLAGMGATVFVQPL) traverse the membrane as a helical segment. K57 carries the N6-succinyllysine modification. N6-acetyllysine is present on K73. The chain crosses the membrane as a helical span at residues 83-101 (GLSAGLLRQATYTTTRLGI). Residue Y102 is modified to Phosphotyrosine. 3 consecutive transmembrane segments (helical) span residues 119 to 140 (FLLKALIGMTAGATGAFVGPPA), 183 to 202 (GCIPTMARAVVVNAAQLASY), and 222 to 240 (HFCAIMISGLVTTAASMPV). The residue at position 256 (K256) is an N6-acetyllysine. Residues 281–300 (GFTPYYARLGPHTVLTFIFL) form a helical membrane-spanning segment.

This sequence belongs to the mitochondrial carrier (TC 2.A.29) family. Interacts with SMIM26. In terms of tissue distribution, expressed in liver, heart and brain.

It localises to the mitochondrion inner membrane. It carries out the reaction (S)-malate(in) + 2-oxoglutarate(out) = (S)-malate(out) + 2-oxoglutarate(in). The enzyme catalyses malonate(in) + 2-oxoglutarate(out) = malonate(out) + 2-oxoglutarate(in). The catalysed reaction is succinate(in) + 2-oxoglutarate(out) = succinate(out) + 2-oxoglutarate(in). It catalyses the reaction maleate(in) + 2-oxoglutarate(out) = maleate(out) + 2-oxoglutarate(in). It carries out the reaction oxaloacetate(in) + 2-oxoglutarate(out) = oxaloacetate(out) + 2-oxoglutarate(in). Functionally, catalyzes the transport of 2-oxoglutarate (alpha-oxoglutarate) across the inner mitochondrial membrane in an electroneutral exchange for malate. Can also exchange 2-oxoglutarate for other dicarboxylic acids such as malonate, succinate, maleate and oxaloacetate, although with lower affinity. Contributes to several metabolic processes, including the malate-aspartate shuttle, the oxoglutarate/isocitrate shuttle, in gluconeogenesis from lactate, and in nitrogen metabolism. Maintains mitochondrial fusion and fission events, and the organization and morphology of cristae. Involved in the regulation of apoptosis. Helps protect from cytotoxic-induced apoptosis by modulating glutathione levels in mitochondria. The sequence is that of Mitochondrial 2-oxoglutarate/malate carrier protein (Slc25a11) from Rattus norvegicus (Rat).